The primary structure comprises 118 residues: DNA-binding protein M164_1799 (118 aa).

Belongs to the PDCD5 family.

This Saccharolobus islandicus (strain M.16.4 / Kamchatka #3) (Sulfolobus islandicus) protein is DNA-binding protein M164_1799.